The following is a 187-amino-acid chain: Methylamine dehydrogenase light chain (187 aa).

A signal peptide (tat-type signal) is located at residues 1–57 (MKKDTGFDSKIEKLARTTASKTGRRGFIGRLGGFLVGSALLPLLPVDRRSRLGGEVQ). Intrachain disulfides connect C79/C144, C85/C117, C92/C177, C94/C142, C102/C133, and C134/C165. W113 bears the Tryptophylquinone mark. A cross-link (tryptophan tryptophylquinone (Trp-Trp)) is located at residues 113-164 (WVASCYNPGDQQTYLIAYRDCCGKQTCGRCNCVNTQGELPVYRPEFNNDIVW).

The protein belongs to the aromatic amine dehydrogenase light chain family. In terms of assembly, heterotetramer of two light and two heavy chains. Tryptophan tryptophylquinone residue is required as a cofactor. In terms of processing, predicted to be exported by the Tat system. The position of the signal peptide cleavage has not been experimentally proven. Tryptophan tryptophylquinone (TTQ) is formed by oxidation of the indole ring of a tryptophan to form tryptophylquinone followed by covalent cross-linking with another tryptophan residue.

It localises to the periplasm. The catalysed reaction is 2 oxidized [amicyanin] + methylamine + H2O = 2 reduced [amicyanin] + formaldehyde + NH4(+) + 2 H(+). It functions in the pathway one-carbon metabolism; methylamine degradation; formaldehyde from methylamine: step 1/1. Methylamine dehydrogenase carries out the oxidation of methylamine. Electrons are passed from methylamine dehydrogenase to amicyanin. The polypeptide is Methylamine dehydrogenase light chain (mauA) (Methylophilus methylotrophus (Bacterium W3A1)).